An 894-amino-acid chain; its full sequence is Glutamate receptor 3 (894 aa).

The N-terminal stretch at 1–28 is a signal peptide; the sequence is MARQKKMGQSVLRAVFFLVLGLLGHSHG. The Extracellular segment spans residues 29–552; the sequence is GFPNTISIGG…GVFSFLDPLA (524 aa). 5 N-linked (GlcNAc...) asparagine glycosylation sites follow: N63, N266, N380, N415, and N422. C91 and C340 are oxidised to a cystine. Positions 508, 510, and 515 each coordinate L-glutamate. A helical transmembrane segment spans residues 553–573; it reads YEIWMCIVFAYIGVSVVLFLV. Topologically, residues 574-602 are cytoplasmic; it reads SRFSPYEWHLEDNNEEPRDPQSPPDPPNE. The segment at residues 603-618 is an intramembrane region (helical; Pore-forming); that stretch reads FGIFNSLWFSLGAFMQ. The stretch at 619–621 is an intramembrane region; the sequence is QGC. C621 is lipidated: S-palmitoyl cysteine. Topologically, residues 622–627 are cytoplasmic; it reads DISPRS. The helical transmembrane segment at 628–648 threads the bilayer; the sequence is LSGRIVGGVWWFFTLIIISSY. At 649–823 the chain is on the extracellular side; it reads TANLAAFLTV…DKTSALSLSN (175 aa). L-glutamate-binding residues include S686, T687, and E737. C750 and C805 are oxidised to a cystine. A helical membrane pass occupies residues 824–844; that stretch reads VAGVFYILVGGLGLAMMVALI. At 845 to 894 the chain is on the cytoplasmic side; sequence EFCYKSRAESKRMKLTKNTQNFKPAPATNTQNYATYREGYNVYGTESVKI. Residue C847 is the site of S-palmitoyl cysteine attachment. Phosphotyrosine is present on residues Y877 and Y887.

This sequence belongs to the glutamate-gated ion channel (TC 1.A.10.1) family. GRIA3 subfamily. In terms of assembly, homotetramer or heterotetramer of pore-forming glutamate receptor subunits. Tetramers may be formed by the dimerization of dimers. Interacts with PICK1, GRIP1 and GRIP2. Found in a complex with GRIA1, GRIA2, GRIA4, CNIH2, CNIH3, CACNG2, CACNG3, CACNG4, CACNG5, CACNG7 and CACNG8. Interacts with CACNG5. Found in a complex with GRIA1, GRIA2, GRIA4, DLG4, CACNG8 and CNIH2.

It localises to the cell membrane. The protein resides in the postsynaptic cell membrane. The protein localises to the postsynaptic density membrane. The catalysed reaction is Ca(2+)(in) = Ca(2+)(out). Ionotropic glutamate receptor that functions as a ligand-gated cation channel, gated by L-glutamate and glutamatergic agonists such as alpha-amino-3-hydroxy-5-methyl-4-isoxazolepropionic acid (AMPA), quisqualic acid, and kainic acid. L-glutamate acts as an excitatory neurotransmitter at many synapses in the central nervous system and plays an important role in fast excitatory synaptic transmission by inducing long-term potentiation. Binding of the excitatory neurotransmitter L-glutamate induces a conformation change, leading to the opening of the cation channel, and thereby converts the chemical signal to an electrical impulse upon entry of calcium. The receptor then desensitizes rapidly and enters a transient inactive state, characterized by the presence of bound agonist. In the presence of CACNG8, shows resensitization which is characterized by a delayed accumulation of current flux upon continued application of glutamate. This is Glutamate receptor 3 from Homo sapiens (Human).